Consider the following 128-residue polypeptide: Glycine cleavage system H protein (128 aa).

A Lipoyl-binding domain is found at 25 to 107 (TVRVGITDFA…YEGGWLFEIT (83 aa)). Lys-66 carries the N6-lipoyllysine modification.

Belongs to the GcvH family. As to quaternary structure, the glycine cleavage system is composed of four proteins: P, T, L and H. (R)-lipoate serves as cofactor.

Functionally, the glycine cleavage system catalyzes the degradation of glycine. The H protein shuttles the methylamine group of glycine from the P protein to the T protein. The polypeptide is Glycine cleavage system H protein (Micrococcus luteus (strain ATCC 4698 / DSM 20030 / JCM 1464 / CCM 169 / CCUG 5858 / IAM 1056 / NBRC 3333 / NCIMB 9278 / NCTC 2665 / VKM Ac-2230) (Micrococcus lysodeikticus)).